Reading from the N-terminus, the 114-residue chain is Astacin-like metalloprotease toxin 4 (114 aa).

One can recognise a Peptidase M12A domain in the interval 1–114 (RETNENDYVD…GLLCLFKGSV (114 aa)). Cys-17 and Cys-38 form a disulfide bridge. A Zn(2+)-binding site is contributed by His-46. Glu-47 is an active-site residue. Zn(2+) is bound by residues His-50 and His-56. Asn-88 is a glycosylation site (N-linked (GlcNAc...) asparagine).

In terms of assembly, monomer. Zn(2+) is required as a cofactor. Expressed by the venom gland.

It is found in the secreted. With respect to regulation, inhibited by 1,10-phenanthroline. In terms of biological role, zinc metalloprotease. Provoques deadhesion of endothelial cells from cell cultures, and also degradation of fibronectin, fibrinogen and gelatin in vitro. Its role in the venom is not fully understood but it might act as a spreading factor that facilitates diffusion of other venom toxins. Alternatively, it might be involved in the proteolytic processing of other venom toxins or it might play a role in extra-oral digestion of prey. The chain is Astacin-like metalloprotease toxin 4 from Loxosceles laeta (South American recluse spider).